The primary structure comprises 102 residues: RNA-binding protein Hfq (102 aa).

The region spanning 9-68 (DPFVNALRRERVPVSIYLVNGIKLQGQIESFDQFVILLKNTVSQMVYKHAISTVVPSRPV) is the Sm domain. The tract at residues 63–102 (VPSRPVSHHSNNAGGGASNNYHHGSNAQGSTAQQDSEETE) is disordered. Residues 70–88 (HHSNNAGGGASNNYHHGSN) are compositionally biased toward low complexity.

Belongs to the Hfq family. In terms of assembly, homohexamer.

RNA chaperone that binds small regulatory RNA (sRNAs) and mRNAs to facilitate mRNA translational regulation in response to envelope stress, environmental stress and changes in metabolite concentrations. Also binds with high specificity to tRNAs. This is RNA-binding protein Hfq from Salmonella heidelberg (strain SL476).